Reading from the N-terminus, the 463-residue chain is Probable glucan endo-1,3-beta-glucosidase eglC (463 aa).

The first 18 residues, 1-18 (MQLTHLLAFALSLATSEA), serve as a signal peptide directing secretion. N-linked (GlcNAc...) asparagine glycosylation is present at asparagine 84. Glutamate 128 serves as the catalytic Proton donor. Asparagine 183 carries an N-linked (GlcNAc...) asparagine glycan. Catalysis depends on glutamate 239, which acts as the Nucleophile. An N-linked (GlcNAc...) asparagine glycan is attached at asparagine 312. Disordered stretches follow at residues 317–354 (SASA…SSAV) and 396–430 (SGSS…NSGA). Residue glycine 440 is the site of GPI-anchor amidated glycine attachment. Residues 441-463 (GASSVSGSVFGALVAVFAFVATL) constitute a propeptide, removed in mature form.

It belongs to the glycosyl hydrolase 17 family. In terms of processing, the GPI-anchor is attached to the protein in the endoplasmic reticulum and serves to target the protein to the cell surface. There, the glucosamine-inositol phospholipid moiety is cleaved off and the GPI-modified mannoprotein is covalently attached via its lipidless GPI glycan remnant to the 1,6-beta-glucan of the outer cell wall layer.

Its subcellular location is the cell membrane. It localises to the secreted. It is found in the cell wall. It carries out the reaction Hydrolysis of (1-&gt;3)-beta-D-glucosidic linkages in (1-&gt;3)-beta-D-glucans.. In terms of biological role, glucanases play a role in cell expansion during growth, in cell-cell fusion during mating, and in spore release during sporulation. This enzyme may be involved in beta-glucan degradation and also function biosynthetically as a transglycosylase. In Aspergillus oryzae (strain ATCC 42149 / RIB 40) (Yellow koji mold), this protein is Probable glucan endo-1,3-beta-glucosidase eglC (eglC).